The chain runs to 162 residues: NADH-quinone oxidoreductase subunit I (162 aa).

2 4Fe-4S ferredoxin-type domains span residues 52 to 82 and 93 to 122; these read LRRYPNGEERCIACKLCEAICPAQAITIEAG and TRYDIDMVKCIYCGFCQEACPVDAIVEGPN. The [4Fe-4S] cluster site is built by C62, C65, C68, C72, C102, C105, C108, and C112.

Belongs to the complex I 23 kDa subunit family. NDH-1 is composed of 14 different subunits. Subunits NuoA, H, J, K, L, M, N constitute the membrane sector of the complex. The cofactor is [4Fe-4S] cluster.

It localises to the cell inner membrane. It carries out the reaction a quinone + NADH + 5 H(+)(in) = a quinol + NAD(+) + 4 H(+)(out). In terms of biological role, NDH-1 shuttles electrons from NADH, via FMN and iron-sulfur (Fe-S) centers, to quinones in the respiratory chain. The immediate electron acceptor for the enzyme in this species is believed to be ubiquinone. Couples the redox reaction to proton translocation (for every two electrons transferred, four hydrogen ions are translocated across the cytoplasmic membrane), and thus conserves the redox energy in a proton gradient. This Xanthobacter autotrophicus (strain ATCC BAA-1158 / Py2) protein is NADH-quinone oxidoreductase subunit I.